Here is an 81-residue protein sequence, read N- to C-terminus: uncharacterized protein (81 aa).

Positions 1 to 20 (MIDDHEALLLLVLSSGPAAL) are cleaved as a signal peptide.

This is an uncharacterized protein from Treponema pallidum (strain Nichols).